A 101-amino-acid chain; its full sequence is Small ribosomal subunit protein uS14 (101 aa).

Belongs to the universal ribosomal protein uS14 family. In terms of assembly, part of the 30S ribosomal subunit. Contacts proteins S3 and S10.

Functionally, binds 16S rRNA, required for the assembly of 30S particles and may also be responsible for determining the conformation of the 16S rRNA at the A site. The protein is Small ribosomal subunit protein uS14 of Histophilus somni (strain 2336) (Haemophilus somnus).